A 316-amino-acid polypeptide reads, in one-letter code: Putative mannose-6-phosphate isomerase YvyI (316 aa).

His98, Glu116, and His173 together coordinate Zn(2+). Arg193 is an active-site residue.

It belongs to the mannose-6-phosphate isomerase type 1 family. It depends on Zn(2+) as a cofactor.

It catalyses the reaction D-mannose 6-phosphate = D-fructose 6-phosphate. This chain is Putative mannose-6-phosphate isomerase YvyI (yvyI), found in Bacillus subtilis (strain 168).